Here is a 424-residue protein sequence, read N- to C-terminus: 26S proteasome regulatory subunit 4 homolog (424 aa).

Residues 1–11 (MSRDKSERDNL) show a composition bias toward basic and acidic residues. Positions 1 to 33 (MSRDKSERDNLQDTTTINLRRRRRVKEGKAASK) are disordered. Position 210–217 (210–217 (GLPGTGKT)) interacts with ATP.

The protein belongs to the AAA ATPase family. The 26S proteasome consists of a 20S proteasome core and two 19S regulatory subunits. The 20S proteasome core is composed of 28 subunits that are arranged in four stacked rings, resulting in a barrel-shaped structure. The two end rings are each formed by seven alpha subunits, and the two central rings are each formed by seven beta subunits. The catalytic chamber with the active sites is on the inside of the barrel.

It is found in the cytoplasm. It localises to the nucleus. Acts as a regulatory subunit of the 26S proteasome which degrades poly-ubiquitinated proteins in the cytoplasm and in the nucleus. It is essential for the regulated turnover of proteins and for the removal of misfolded proteins. The proteasome is a multicatalytic proteinase complex that is characterized by its ability to cleave peptides with Arg, Phe, Tyr, Leu, and Glu adjacent to the leaving group at neutral or slightly basic pH. The chain is 26S proteasome regulatory subunit 4 homolog (RPT2) from Encephalitozoon cuniculi (strain GB-M1) (Microsporidian parasite).